The chain runs to 436 residues: GTPase Der (436 aa).

EngA-type G domains lie at 4 to 167 and 174 to 350; these read PVVA…PEVE and VRVA…EQRT. GTP-binding positions include 10–17, 57–61, 120–123, 180–187, 227–231, and 292–295; these read GRPNVGKS, DTGGL, NKVD, DTAGL, and NKWD. One can recognise a KH-like domain in the interval 351 to 435; that stretch reads RRISTSEVND…PLRIILRRKN (85 aa).

Belongs to the TRAFAC class TrmE-Era-EngA-EngB-Septin-like GTPase superfamily. EngA (Der) GTPase family. In terms of assembly, associates with the 50S ribosomal subunit.

Its function is as follows. GTPase that plays an essential role in the late steps of ribosome biogenesis. The protein is GTPase Der of Gemmatimonas aurantiaca (strain DSM 14586 / JCM 11422 / NBRC 100505 / T-27).